Consider the following 434-residue polypeptide: Enolase (434 aa).

Glutamine 163 is a binding site for (2R)-2-phosphoglycerate. Glutamate 205 acts as the Proton donor in catalysis. Residues aspartate 243, glutamate 291, and aspartate 318 each contribute to the Mg(2+) site. (2R)-2-phosphoglycerate contacts are provided by lysine 343, arginine 372, serine 373, and lysine 394. Lysine 343 (proton acceptor) is an active-site residue.

The protein belongs to the enolase family. The cofactor is Mg(2+).

It is found in the cytoplasm. The protein resides in the secreted. It localises to the cell surface. It catalyses the reaction (2R)-2-phosphoglycerate = phosphoenolpyruvate + H2O. It functions in the pathway carbohydrate degradation; glycolysis; pyruvate from D-glyceraldehyde 3-phosphate: step 4/5. Catalyzes the reversible conversion of 2-phosphoglycerate (2-PG) into phosphoenolpyruvate (PEP). It is essential for the degradation of carbohydrates via glycolysis. The protein is Enolase of Fusobacterium nucleatum subsp. nucleatum (strain ATCC 25586 / DSM 15643 / BCRC 10681 / CIP 101130 / JCM 8532 / KCTC 2640 / LMG 13131 / VPI 4355).